We begin with the raw amino-acid sequence, 830 residues long: Pentatricopeptide repeat-containing protein At5g55740, chloroplastic (830 aa).

Residues 1-59 constitute a chloroplast transit peptide; it reads MASLPFNTIPNKVPFSVSSKPSSKHHDEQAHSPSSTSYFHRVSSLCKNGEIKEALSLVT. The segment at 15–36 is disordered; it reads FSVSSKPSSKHHDEQAHSPSST. PPR repeat units lie at residues 69 to 103, 106 to 136, 137 to 171, 172 to 206, 207 to 237, 238 to 272, 273 to 307, 308 to 338, 339 to 373, 374 to 408, 409 to 439, 440 to 474, 475 to 509, 510 to 544, 545 to 575, 581 to 611, 612 to 646, 647 to 682, and 683 to 713; these read GPEI…GDFY, NEYI…LRVR, NVFS…EIFP, DNFV…GLED, CVFV…IPDR, NAVA…GVEP, TRVT…GMEL, DNIL…MFEK, DVVT…KLKY, DCVT…SFES, DIVL…TVEK, DLIL…GVPP, NVIT…GIIP, NLIS…GLRP, NAFS…IIRN, LVSI…KLYS, ELPL…GLKP, DNIT…SMKP, and CLEH…MPFK. Positions 718–793 are type E motif; sequence MIQSLVASCN…KPGCSWIQIT (76 aa). Residues 796-826 are type E(+) motif; it reads EGVHVFVANDKTHTRINEIQMMLALLLYDMG.

This sequence belongs to the PPR family. PCMP-E subfamily.

Its subcellular location is the plastid. The protein localises to the chloroplast. Plays a major role in chloroplast RNA editing. Acts as a site-recognition transacting factor involved in the edition of the site 2 of ndhD (ndhD-2), which encodes a subunit of the NDH complex. The sequence is that of Pentatricopeptide repeat-containing protein At5g55740, chloroplastic (CRR21) from Arabidopsis thaliana (Mouse-ear cress).